The following is a 199-amino-acid chain: Small ribosomal subunit protein uS4B (199 aa).

Residues Cys-88–Phe-151 form the S4 RNA-binding domain.

Belongs to the universal ribosomal protein uS4 family. As to quaternary structure, part of the 30S ribosomal subunit. Contacts protein S5. The interaction surface between S4 and S5 is involved in control of translational fidelity.

Functionally, one of the primary rRNA binding proteins, it binds directly to 16S rRNA where it nucleates assembly of the body of the 30S subunit. With S5 and S12 plays an important role in translational accuracy. This Alkaliphilus metalliredigens (strain QYMF) protein is Small ribosomal subunit protein uS4B.